The primary structure comprises 156 residues: Putative pre-16S rRNA nuclease (156 aa).

The protein belongs to the YqgF nuclease family.

It localises to the cytoplasm. Could be a nuclease involved in processing of the 5'-end of pre-16S rRNA. The chain is Putative pre-16S rRNA nuclease from Bartonella tribocorum (strain CIP 105476 / IBS 506).